We begin with the raw amino-acid sequence, 391 residues long: PPE family protein PPE15 (391 aa).

The eukaryotic-like SH3 domain stretch occupies residues 312–367 (LGEATLVGRLSVPAAWSTAAPATTAGATALEGSGWTVAAEEAGPVTGMMPGMASAA).

Belongs to the mycobacterial PPE family. As to quaternary structure, forms a heterodimer with PE8. The dimer forms a 1:1:1 heterotrimeric complex with EspG5. PPE15 interacts directly with EspG5. Interacts via the C-terminal region with host Toll-like receptor 4 (TLR4). Interacts, also via the C-terminal region, with two cytosolic subunits of the host NOX complex, p47phox (NCF1) and p67phox (NCF2).

The protein resides in the secreted. It localises to the host mitochondrion. Its function is as follows. May play a critical role in the homeostasis of triacylglycerol-containing lipid droplets in M.tuberculosis and influence the entry of the pathogen into a dormant state. Is recognized by host TLR4 receptor at the macrophage cell surface, which modulates the host immune response, induces mitochondrial stress and perturbations, and induces macrophage apoptosis leading to pathogen persistence. Also downregulates NOX-mediated reactive oxygen species (ROS) generation in THP1 macrophages, which increases intracellular survival of bacteria. PPE15 interacts with two subunits of the host NADPH oxidase (NOX) complex in the cytosol of macrophages and prevents their migration to the membrane, which inhibits the assembly of the NOX complex at the plasma membrane of THP1 macrophages. This leads to reduced NOX activity and diminished ROS generation. This is PPE family protein PPE15 (PPE15) from Mycobacterium tuberculosis (strain CDC 1551 / Oshkosh).